Consider the following 593-residue polypeptide: NADH-quinone oxidoreductase subunit C/D (593 aa).

Residues M1–Q184 form an NADH dehydrogenase I subunit C region. The segment at D208–R593 is NADH dehydrogenase I subunit D.

The protein in the N-terminal section; belongs to the complex I 30 kDa subunit family. This sequence in the C-terminal section; belongs to the complex I 49 kDa subunit family. As to quaternary structure, NDH-1 is composed of 13 different subunits. Subunits NuoB, CD, E, F, and G constitute the peripheral sector of the complex.

The protein resides in the cell inner membrane. It catalyses the reaction a quinone + NADH + 5 H(+)(in) = a quinol + NAD(+) + 4 H(+)(out). In terms of biological role, NDH-1 shuttles electrons from NADH, via FMN and iron-sulfur (Fe-S) centers, to quinones in the respiratory chain. The immediate electron acceptor for the enzyme in this species is believed to be ubiquinone. Couples the redox reaction to proton translocation (for every two electrons transferred, four hydrogen ions are translocated across the cytoplasmic membrane), and thus conserves the redox energy in a proton gradient. In Pseudomonas paraeruginosa (strain DSM 24068 / PA7) (Pseudomonas aeruginosa (strain PA7)), this protein is NADH-quinone oxidoreductase subunit C/D.